The primary structure comprises 649 residues: MFHLIPFVVAFLLVFLTWFLIKKLRKVIIFELDQNSKHFGGELVADVLKAHDVRFLFTLCGGHISPILVAAERQNIRVIDVRHEASAVFAADAVSRLSGTVGVAAVTAGPGLTNTVTAVKNAQMAESPIVLLAGAAAGLLRGRGSLQDIDQLSLFRPLCKWSGRVNCVKDIVPMLCKAFYLARSGTPGPVLVEFPIDTLYPYSLVRQHLRISDNPQSWRQRFTNWYLRFYLFRLFANGFRIQPCLPGQVPTQIPVEIPSIPWPSTKSIDQLVWLLSQAKRPVIVVSSQALLPPVPATQTAEHVKSLRIPVYLTGMARGLLGRHHPCVFRHARRAALRVADLIILAGSVCDFRMDYGRVLNRKAKIVIINRDKKQLYLNSDIFWRPYLAIRGDVGTALKELSISLNDRFPCLSDFRCPTEWVGELLAREHHRDEEIRQSSLTQPAERINPLSVLWQLEHNGLTDQESIIVADGGDFVGSAAYILRPRGPLSWLDPGPFGTLGVGGGFALGAKLCRPQAHVWVVYGDGSAGYSLAEWDTMARHKAPAIGVIGNDACWSQIARDQLGLFGSNVACGLQSTRYDLVGAAYAGADPLNSTLSVEDSGAFLVTEKNLDNLSDYMAHARELSDRGLPSIINCNIAASGFREGSISL.

The helical transmembrane segment at 2-21 (FHLIPFVVAFLLVFLTWFLI) threads the bilayer. Glutamate 84 contributes to the thiamine diphosphate binding site. The interval 474–554 (DFVGSAAYIL…AIGVIGNDAC (81 aa)) is thiamine pyrophosphate binding. 2 residues coordinate Mg(2+): aspartate 525 and asparagine 551.

The protein belongs to the TPP enzyme family. It depends on Mg(2+) as a cofactor. Requires thiamine diphosphate as cofactor.

Its subcellular location is the endoplasmic reticulum membrane. It catalyses the reaction 2-hydroxyoctadecanoyl-CoA = heptadecanal + formyl-CoA. The enzyme catalyses (2R)-hydroxyhexadecanoyl-CoA = pentadecanal + formyl-CoA. Endoplasmic reticulum 2-OH acyl-CoA lyase involved in the cleavage (C1 removal) reaction in the fatty acid alpha-oxydation in a thiamine pyrophosphate (TPP)-dependent manner. Involved in the phytosphingosine degradation pathway. The protein is 2-hydroxyacyl-CoA lyase 2 (ilvbl) of Xenopus laevis (African clawed frog).